The primary structure comprises 205 residues: Large ribosomal subunit protein uL3c (205 aa).

Positions 127 to 153 are disordered; sequence HFSRGPMSHGSKNHRQPGSIGAGTTPG.

This sequence belongs to the universal ribosomal protein uL3 family. As to quaternary structure, part of the 50S ribosomal subunit.

The protein localises to the plastid. It is found in the chloroplast. Its function is as follows. One of the primary rRNA binding proteins, it binds directly near the 3'-end of the 23S rRNA, where it nucleates assembly of the 50S subunit. The protein is Large ribosomal subunit protein uL3c (rpl3) of Porphyra purpurea (Red seaweed).